A 429-amino-acid chain; its full sequence is MDNNNACVLVDGHSAELKLRSSTIGPNVLGIGSLYEQTKMFTYDPGFTSTASCESSITFIDGDEGVLLHRGYPIEQLAEHGDFLEVCYLLLYGELPTAAQKKDFDYRVVHHTMVHEQMSRFFTGFRRDAHPMAVMCGCVGALSAFYHDSTDITDPHQRMVASLRMIAKMPTLAAMAYKYHIGQPFVYPKNDLDYASNFLRMCFAVPCEEYVVNPVLARAMDRIFILHADHEQNASTSTVRLAGSSGANPFACIAAGIACLWGPAHGGANERALNMLTEIGTVDRIPEYIARAKDKNDPFRLMGFGHRVYKNYDPRAKIMQKTAHEVLGELGIKDDPLLDIAIELERIALTDDYFIEKKLYPNVDFYSGITLKALGFPTTMFTVLFALARTVGWIAQWNEMIEDPDQRIGRPRQLYTGAPLREYVPLSKR.

Active-site residues include H306 and D364.

The protein belongs to the citrate synthase family.

It catalyses the reaction oxaloacetate + acetyl-CoA + H2O = citrate + CoA + H(+). It functions in the pathway carbohydrate metabolism; tricarboxylic acid cycle; isocitrate from oxaloacetate: step 1/2. In terms of biological role, the exact function of the plasmid-encoded citrate synthase is not clear, it could help nodulation by allowing the bacteria to use citrate as a chelator of iron and calcium. This is Citrate synthase, plasmid (pcsA) from Rhizobium tropici.